Here is a 31-residue protein sequence, read N- to C-terminus: Antifungal protein 1 (31 aa).

2 stretches are compositionally biased toward basic and acidic residues: residues 1–10 and 18–31; these read PGAGSQEERM and DFSH…MVRE. The tract at residues 1–31 is disordered; that stretch reads PGAGSQEERMQGQMEGQDFSHEERFLSMVRE.

Heterodimer; disulfide-linked. Disulfide bonds.

Has antifungal activity against C.gloeosporioides but not against B.cinerea and Fusarium sp. or against various yeasts. Has no antibacterial activity. This chain is Antifungal protein 1, found in Passiflora alata (Winged-stem passion flower).